Reading from the N-terminus, the 82-residue chain is Small ribosomal subunit protein uS17 (82 aa).

This sequence belongs to the universal ribosomal protein uS17 family. Part of the 30S ribosomal subunit.

Its function is as follows. One of the primary rRNA binding proteins, it binds specifically to the 5'-end of 16S ribosomal RNA. This Shewanella sp. (strain W3-18-1) protein is Small ribosomal subunit protein uS17.